A 317-amino-acid polypeptide reads, in one-letter code: Transcription factor EC (317 aa).

The tract at residues 1 to 90 is necessary for transcriptional transactivation; that stretch reads MTFDCRVCDQ…GLTDAPCPSI (90 aa). The bHLH domain maps to 110–163; it reads QKKDNHNLIERRRRYNINYRIKELGTLIPKSNDPDMRWNKGTILKASVDYIKWL. The necessary for transcriptional transactivation stretch occupies residues 242–317; it reads TSPEFYEQAV…SLSSEDGDEL (76 aa).

The protein belongs to the MiT/TFE family. Homodimer. Forms heterodimers with MITF. Interacts with MITF. Forms heterodimers with TFE3. As to expression, expressed in osteoclast-like cells (at protein level). Expressed in cells of the mononuclear phagocyte lineage. Expressed in macrophages and in osteoclast-like cells.

The protein resides in the nucleus. Transcriptional regulator that acts as a repressor or an activator. Acts as a transcriptional transactivator on the proximal promoter region of the tartrate-resistant acid phosphatase (TRAP) E-box containing promoter. Collaborates with MITF in target gene activation. Acts as a transcriptional repressor on minimal promoter containing element F (that includes an E-box sequence). Binds to element F in an E-box sequence-specific manner. Acts as a transcriptional repressor on minimal promoter containing mu E3 enhancer sequence. Binds to mu E3 DNA sequence of the immunoglobulin heavy-chain gene enhancer. Binds DNA in a homo- or heterodimeric form. The protein is Transcription factor EC (Tfec) of Mus musculus (Mouse).